The sequence spans 284 residues: RNase adapter protein RapZ (284 aa).

Residue 8–15 coordinates ATP; it reads GRSGSGKS. A GTP-binding site is contributed by 56–59; that stretch reads DVRN. Residues 266-284 form an RNA-binding region; the sequence is RSRGKNVQSRHRTLEKRKT.

The protein belongs to the RapZ-like family. RapZ subfamily. As to quaternary structure, homotrimer.

Its function is as follows. Modulates the synthesis of GlmS, by affecting the processing and stability of the regulatory small RNA GlmZ. When glucosamine-6-phosphate (GlcN6P) concentrations are high in the cell, RapZ binds GlmZ and targets it to cleavage by RNase E. Consequently, GlmZ is inactivated and unable to activate GlmS synthesis. Under low GlcN6P concentrations, RapZ is sequestered and inactivated by an other regulatory small RNA, GlmY, preventing GlmZ degradation and leading to synthesis of GlmS. This chain is RNase adapter protein RapZ, found in Salmonella typhimurium (strain LT2 / SGSC1412 / ATCC 700720).